Here is a 460-residue protein sequence, read N- to C-terminus: DNA repair protein RadA (460 aa).

The C4-type zinc finger occupies 11-28 (CNECGADYPRWQGQCSAC). 102-109 (GNPGAGKS) contacts ATP. Residues 258-262 (KNRFG) carry the RadA KNRFG motif motif. Residues 357–460 (DVFVNVVGGV…ADALSVFDDL (104 aa)) are lon-protease-like.

This sequence belongs to the RecA family. RadA subfamily.

DNA-dependent ATPase involved in processing of recombination intermediates, plays a role in repairing DNA breaks. Stimulates the branch migration of RecA-mediated strand transfer reactions, allowing the 3' invading strand to extend heteroduplex DNA faster. Binds ssDNA in the presence of ADP but not other nucleotides, has ATPase activity that is stimulated by ssDNA and various branched DNA structures, but inhibited by SSB. Does not have RecA's homology-searching function. This Salmonella typhimurium (strain LT2 / SGSC1412 / ATCC 700720) protein is DNA repair protein RadA.